Here is a 317-residue protein sequence, read N- to C-terminus: tRNA pseudouridine synthase B (317 aa).

The Nucleophile role is filled by aspartate 47.

It belongs to the pseudouridine synthase TruB family. Type 1 subfamily.

It carries out the reaction uridine(55) in tRNA = pseudouridine(55) in tRNA. In terms of biological role, responsible for synthesis of pseudouridine from uracil-55 in the psi GC loop of transfer RNAs. The sequence is that of tRNA pseudouridine synthase B from Shewanella denitrificans (strain OS217 / ATCC BAA-1090 / DSM 15013).